The following is a 354-amino-acid chain: Galactoside alpha-(1,2)-fucosyltransferase 2 (354 aa).

The Cytoplasmic segment spans residues 1–22 (MRFAPDYVLCPPTATRRLRATH). The chain crosses the membrane as a helical; Signal-anchor for type II membrane protein span at residues 23-43 (PSVSTIYFLFTIFVVSTVFHC). Residues 44–354 (HQRLALVPAP…NMGRALWSGL (311 aa)) are Lumenal-facing. 3 N-linked (GlcNAc...) asparagine glycosylation sites follow: Asn-197, Asn-291, and Asn-317.

Belongs to the glycosyltransferase 11 family. Salivary and lactating mammary glands.

It is found in the golgi apparatus. The protein localises to the golgi stack membrane. The catalysed reaction is a beta-D-galactosyl-(1-&gt;3)-N-acetyl-beta-D-glucosaminyl derivative + GDP-beta-L-fucose = an alpha-L-Fuc-(1-&gt;2)-beta-D-Gal-(1-&gt;3)-beta-D-GlcNAc derivative + GDP + H(+). The enzyme catalyses a beta-D-galactosyl-(1-&gt;4)-N-acetyl-beta-D-glucosaminyl derivative + GDP-beta-L-fucose = an alpha-L-Fuc-(1-&gt;2)-beta-D-Gal-(1-&gt;4)-beta-D-GlcNAc derivative + GDP + H(+). It catalyses the reaction a neolactoside nLc4Cer + GDP-beta-L-fucose = a neolactoside IV(2)-alpha-Fuc-nLc4Cer + GDP + H(+). It carries out the reaction a neolactoside nLc4Cer(d18:1(4E)) + GDP-beta-L-fucose = a neolactoside IV(2)-alpha-Fuc-nLc4Cer(d18:1(4E)) + GDP + H(+). The catalysed reaction is a ganglioside GM1 + GDP-beta-L-fucose = a ganglioside Fuc-GM1 + GDP + H(+). The enzyme catalyses a ganglioside GA1 + GDP-beta-L-fucose = a ganglioside Fuc-GA1 + GDP + H(+). It catalyses the reaction Lc4Cer + GDP-beta-L-fucose = alpha-L-fucosyl-(1-&gt;2)-beta-D-galactosyl-(1-&gt;3)-N-acetyl-beta-D-glucosaminyl-(1-&gt;3)-beta-D-galactosyl-(1-&gt;4)-beta-D-glucosyl-(1&lt;-&gt;1')-ceramide + GDP + H(+). It carries out the reaction a beta-D-Gal-(1-&gt;3)-beta-D-GlcNAc-(1-&gt;3)-beta-D-Gal-(1-&gt;4)-beta-D-Glc-(1&lt;-&gt;1')-Cer(d18:1(4E)) + GDP-beta-L-fucose = alpha-L-fucosyl-(1-&gt;2)- beta-D-galactosyl-(1-&gt;3)-N-acetyl-beta-D-glucosaminyl-(1-&gt;3)-beta-D-galactosyl-(1-&gt;4)-beta-D-glucosyl-(1&lt;-&gt;1')-N-acylsphing-4-enine + GDP + H(+). The catalysed reaction is a ganglioside GD1b + GDP-beta-L-fucose = a ganglioside Fuc-GD1b + GDP + H(+). The enzyme catalyses a ganglioside GM1 (d18:1(4E)) + GDP-beta-L-fucose = a ganglioside Fuc-GM1 (d18:1(4E)) + GDP + H(+). It catalyses the reaction a globoside GalGb4Cer (d18:1(4E)) + GDP-beta-L-fucose = a globoside Globo-H (d18:1(4E)) + GDP + H(+). It carries out the reaction a lactoside III(4)-a-Fuc-Lc4Cer + GDP-beta-L-fucose = a lactoside IV(2),III(4)-a-[Fuc]2-Lc4Cer + GDP + H(+). The catalysed reaction is beta-D-galactosyl-(1-&gt;3)-N-acetyl-D-galactosamine + GDP-beta-L-fucose = alpha-L-fucosyl-(1-&gt;2)-beta-D-galactosyl-(1-&gt;3)-N-acetyl-D-galactosamine + GDP + H(+). It participates in protein modification; protein glycosylation. In terms of biological role, catalyzes the transfer of L-fucose, from a guanosine diphosphate-beta-L-fucose, to the terminal galactose on both O- and N-linked glycans chains of cell surface glycoproteins and glycolipids and the resulting epitope regulates several processes such as cell-cell interaction including host-microbe interaction, cell surface expression and cell proliferation. Preferentially fucosylates gangliosides GA1 and GM1 in the antrum, cecum and colon and in the female reproductive organs. Fucosylated host glycoproteins or glycolipids mediate interaction with intestinal microbiota influencing its composition. Creates a soluble precursor oligosaccharide FuC-alpha ((1,2)Galbeta-) called the H antigen which is an essential substrate for the final step in the soluble ABO blood group antigen synthesis pathway. This is Galactoside alpha-(1,2)-fucosyltransferase 2 from Oryctolagus cuniculus (Rabbit).